The following is a 686-amino-acid chain: Delta-like protein 4 (686 aa).

The first 27 residues, 1 to 27 (MTPGSRSACRWALLLLAVLWPQQRAAG), serve as a signal peptide directing secretion. Residues 28–530 (SGIFQLRLQE…PVGLPPSFPW (503 aa)) lie on the Extracellular side of the membrane. Cystine bridges form between C51-C55 and C62-C75. 3 N-linked (GlcNAc...) asparagine glycosylation sites follow: N79, N109, and N162. Positions 174 to 218 (VVCSDNYYGDSCSRLCKKRDDHFGHYECQPDGSLSCLPGWTGKYC) constitute a DSL domain. C176 and C185 form a disulfide bridge. Interaction with Notch1 regions lie at residues 186–188 (SRL) and 192–196 (RDDHF). 26 disulfides stabilise this stretch: C189–C201, C209–C218, C223–C234, C227–C240, C242–C251, C254–C265, C260–C271, C273–C282, C289–C301, C295–C311, C313–C322, C329–C340, C334–C349, C351–C360, C367–C378, C372–C389, C391–C400, C407–C418, C412–C427, C429–C438, C445–C456, C450–C465, C467–C476, C485–C496, C490–C507, and C509–C518. 8 consecutive EGF-like domains span residues 219 to 252 (DQPICLSGCHEQNGYCSKPDECNCRPGWQGPLCN), 256 to 283 (PHNGCRHGTCTIPWQCACDEGWGGLFCD), 285 to 323 (DLNYCTHHSPCKNGSTCSNSGPRGYTCTCLPGYTGEHCE), 325 to 361 (ELSKCASNPCRNGGSCKDHENSYHCLCPPGYYGQHCE), 363 to 401 (STLTCADSPCFNGGSCRERNQGASYACECPPNFTGSNCE), 403 to 439 (KVDRCTSNPCANGGQCLNRGPSRTCRCRPGFTGTHCE), 441 to 477 (HISDCARSPCAHGGTCHDLENGPVCTCPAGFSGRRCE), and 481 to 519 (TNDACASGPCFNGATCYTGLSPNNFVCNCPYGFVGSRCE). The helical transmembrane segment at 531–551 (VAVSLGVGLVVLLVLLVMVAV) threads the bilayer. Residues 552 to 686 (AVRQLRLRRP…RNECVIATEV (135 aa)) are Cytoplasmic-facing.

As to quaternary structure, interacts with NOTCH4. Interacts (via N-terminal DSL and MNNL domains) with NOTCH1 (via EGF-like domains).

Its subcellular location is the cell membrane. In terms of biological role, involved in the Notch signaling pathway as Notch ligand. Activates NOTCH1 and NOTCH4. Involved in angiogenesis; negatively regulates endothelial cell proliferation and migration and angiogenic sprouting. Essential for retinal progenitor proliferation. Required for suppressing rod fates in late retinal progenitors as well as for proper generation of other retinal cell types. During spinal cord neurogenesis, inhibits V2a interneuron fate. In Rattus norvegicus (Rat), this protein is Delta-like protein 4.